We begin with the raw amino-acid sequence, 208 residues long: Urease accessory protein UreG 1 (208 aa).

GTP is bound at residue 14–21; it reads GPVGSGKT.

This sequence belongs to the SIMIBI class G3E GTPase family. UreG subfamily. As to quaternary structure, homodimer. UreD, UreF and UreG form a complex that acts as a GTP-hydrolysis-dependent molecular chaperone, activating the urease apoprotein by helping to assemble the nickel containing metallocenter of UreC. The UreE protein probably delivers the nickel.

The protein localises to the cytoplasm. Its function is as follows. Facilitates the functional incorporation of the urease nickel metallocenter. This process requires GTP hydrolysis, probably effectuated by UreG. The protein is Urease accessory protein UreG 1 of Brucella ovis (strain ATCC 25840 / 63/290 / NCTC 10512).